A 286-amino-acid polypeptide reads, in one-letter code: MVAKILDGKQIAKEYRQRLKNQVNDLKEYGFTPKLSVILVGNDGASQSYVKSKKKAAEKIGMISEIIHLDESTSEEVVLSELNRLNNDDTVSGILVQVPLPKQVSEQKVLEAINPEKDVDGFHPINIGKLYIDEQTFVPCTPLGIMEILKHADINLEGKNAVVIGRSHIVGQPVSKLLLQANATVTILHSRTKNMNAHLKQADVIVSAVGQPGLVTKENVKKGAVIIDVGNTPDENGKLKGDVAYDEVKEIASAITPVPGGVGPLTITMVLNNTLLAEKLRRGLTK.

NADP(+)-binding positions include 165 to 167 (GRS) and serine 190.

The protein belongs to the tetrahydrofolate dehydrogenase/cyclohydrolase family. Homodimer.

The enzyme catalyses (6R)-5,10-methylene-5,6,7,8-tetrahydrofolate + NADP(+) = (6R)-5,10-methenyltetrahydrofolate + NADPH. The catalysed reaction is (6R)-5,10-methenyltetrahydrofolate + H2O = (6R)-10-formyltetrahydrofolate + H(+). Its pathway is one-carbon metabolism; tetrahydrofolate interconversion. In terms of biological role, catalyzes the oxidation of 5,10-methylenetetrahydrofolate to 5,10-methenyltetrahydrofolate and then the hydrolysis of 5,10-methenyltetrahydrofolate to 10-formyltetrahydrofolate. In Staphylococcus epidermidis (strain ATCC 12228 / FDA PCI 1200), this protein is Bifunctional protein FolD.